A 425-amino-acid chain; its full sequence is UDP-N-acetylglucosamine 1-carboxyvinyltransferase (425 aa).

22–23 contributes to the phosphoenolpyruvate binding site; that stretch reads KN. UDP-N-acetyl-alpha-D-glucosamine is bound at residue Arg-98. Cys-122 serves as the catalytic Proton donor. Cys-122 is modified (2-(S-cysteinyl)pyruvic acid O-phosphothioketal). Residues 127 to 131, Asp-313, and Ile-335 contribute to the UDP-N-acetyl-alpha-D-glucosamine site; that span reads RPVDQ.

It belongs to the EPSP synthase family. MurA subfamily.

Its subcellular location is the cytoplasm. The enzyme catalyses phosphoenolpyruvate + UDP-N-acetyl-alpha-D-glucosamine = UDP-N-acetyl-3-O-(1-carboxyvinyl)-alpha-D-glucosamine + phosphate. It participates in cell wall biogenesis; peptidoglycan biosynthesis. Cell wall formation. Adds enolpyruvyl to UDP-N-acetylglucosamine. This chain is UDP-N-acetylglucosamine 1-carboxyvinyltransferase, found in Xylella fastidiosa (strain M12).